A 349-amino-acid polypeptide reads, in one-letter code: Acyl-CoA:acyl-CoA alkyltransferase (349 aa).

Glu-97 (proton acceptor) is an active-site residue. The active-site Acyl-thioester intermediate is the Cys-123.

It belongs to the thiolase-like superfamily. OleA family.

It carries out the reaction a 1,2-saturated acyl-CoA + an acyl-CoA + H2O = an (R)-2-alkyl-3-oxoalkanoate + 2 CoA + H(+). In terms of biological role, involved in olefin biosynthesis. Catalyzes a non-decarboxylative head-to-head Claisen condensation of two acyl-CoA molecules, generating an (R)-2-alkyl-3-oxoalkanoate. The S.oneidensis oleABCD genes produce 3,6,9,12,15,19,22,25,28-hentriacontanonaene, which may aid the cells in adapting to a sudden drop in temperature. The sequence is that of Acyl-CoA:acyl-CoA alkyltransferase from Shewanella oneidensis (strain ATCC 700550 / JCM 31522 / CIP 106686 / LMG 19005 / NCIMB 14063 / MR-1).